Here is a 236-residue protein sequence, read N- to C-terminus: uncharacterized protein (236 aa).

In terms of domain architecture, ABC transporter spans L4–D225. G38–S45 provides a ligand contact to ATP.

The protein belongs to the ABC transporter superfamily.

This is an uncharacterized protein from Bacillus subtilis (strain 168).